The following is a 146-amino-acid chain: Large ribosomal subunit protein uL15 (146 aa).

The interval 1-39 (MTLKLHNLRPAPGAKTAKTRVGRGEGSKGKTAGRGTKGT) is disordered.

Belongs to the universal ribosomal protein uL15 family. Part of the 50S ribosomal subunit.

Its function is as follows. Binds to the 23S rRNA. The sequence is that of Large ribosomal subunit protein uL15 from Nocardioides sp. (strain ATCC BAA-499 / JS614).